A 427-amino-acid polypeptide reads, in one-letter code: Gustatory receptor for sugar taste 43a (427 aa).

Over 1–37 (MEISQPSIGIFYISKVLALAPYATVRNSKGRVEIGRS) the chain is Cytoplasmic. The chain crosses the membrane as a helical span at residues 38-63 (WLFTVYSATLTVVMVFLTYRGLLFDA). Over 64 to 75 (NSEIPVRMKSAT) the chain is Extracellular. Positions 70 and 83 each coordinate beta-D-fructose. A helical transmembrane segment spans residues 76–96 (SKVVTALDVSVVVMAIVSGVY). At 97-135 (CGLFSLNDTLELNDRLNKIDNTLNAYNNFRRDRWRALGM) the chain is on the cytoplasmic side. Residues 136–158 (AAVSLLAISILVGLDVGTWMRIA) form a helical membrane-spanning segment. Residues 159–168 (QDMNIAQSDT) are Extracellular-facing. The helical transmembrane segment at 169–193 (ELNVHWYIPFYSLYFILTGLQVNIA) threads the bilayer. Y182 is a beta-D-fructose binding site. Residues 194–293 (NTAYGLGRRF…CVHLLSNSFG (100 aa)) lie on the Cytoplasmic side of the membrane. A helical membrane pass occupies residues 294–316 (IAVLFILVSCLLHLVATAYFLFL). Residue T310 coordinates beta-D-fructose. Over 317-324 (ELLSKRDN) the chain is Extracellular. A helical transmembrane segment spans residues 325–346 (GYLWVQMLWICFHFLRLLMVVE). H337 is a beta-D-fructose binding site. At 347–402 (PCHLAARESRKTIQIVCEIERKVHEPILAEAVKKFWQQLLVVDADFSACGLCRVNR) the chain is on the cytoplasmic side. A helical membrane pass occupies residues 403–423 (TILTSFASAIATYLVILIQFQ). Q421 lines the Ca(2+) pocket. Residues 424-427 (RTNG) are Extracellular-facing.

Belongs to the insect chemoreceptor superfamily. Gustatory receptor (GR) family. Gr21a subfamily. In terms of assembly, homotetramer. In terms of tissue distribution, expressed in the adult labellar chemosensory neurons and in the adult head, abdomen, leg and wing. In larvae, is expressed in taste organs, as well as the brain and the gastrointestinal system.

It localises to the cell membrane. Functionally, gustatory receptor which mediates acceptance or avoidance behavior, depending on its substrates. Gr43a is the main sugar receptor in larvae. Functions as a narrowly tuned fructose receptor in taste neurons but also as a fructose receptor in the brain. Necessary and sufficient to sense hemolymph fructose and promote feeding in hungry flies but suppress feeding in satiated flies. The chain is Gustatory receptor for sugar taste 43a (Gr43a) from Drosophila melanogaster (Fruit fly).